The following is a 46-amino-acid chain: RECRSQSKQFVGLCVSDTNCASVCLTEHFPGGKCDGYRRCFCTKDC.

Disulfide bonds link cysteine 3/cysteine 46, cysteine 14/cysteine 34, cysteine 20/cysteine 40, and cysteine 24/cysteine 42.

In terms of biological role, plant defense peptide. The polypeptide is Defensin Tk-AMP-D6.1 (Triticum kiharae (Wheat)).